A 165-amino-acid polypeptide reads, in one-letter code: 2-halobenzoate 1,2-dioxygenase small subunit (165 aa).

Belongs to the bacterial ring-hydroxylating dioxygenase beta subunit family. As to quaternary structure, heterohexamer of 3 large (CbdA) subunits and 3 small (CbdB) subunits. The heterohexamer is part of 2-halobenzoate dioxygenase two component enzyme system. The other component is a NADH:acceptor reductase (CdbC).

The enzyme catalyses a 2-halobenzoate + NADH + O2 + H(+) = a halide anion + catechol + CO2 + NAD(+). It functions in the pathway xenobiotic degradation; benzoate degradation via CoA ligation. Component of 2-halobenzoate dioxygenase multicomponent enzyme system which catalyzes the incorporation of both atoms of molecular oxygen into 2-halobenzoate to form catechol. The sequence is that of 2-halobenzoate 1,2-dioxygenase small subunit (cbdB) from Burkholderia cepacia (Pseudomonas cepacia).